Consider the following 110-residue polypeptide: Large ribosomal subunit protein P1B (110 aa).

Residues 69–85 show a composition bias toward low complexity; sequence PAAGGAGAPAAAAGGEA. Residues 69–110 form a disordered region; that stretch reads PAAGGAGAPAAAAGGEAAAEEQKEEAKEEEESDEDMGFGLFD. Acidic residues predominate over residues 95–104; that stretch reads KEEEESDEDM.

This sequence belongs to the eukaryotic ribosomal protein P1/P2 family. Component of the large ribosomal subunit (LSU). Mature yeast ribosomes consist of a small (40S) and a large (60S) subunit. The 40S small subunit contains 1 molecule of ribosomal RNA (18S rRNA) and at least 33 different proteins. The large 60S subunit contains 3 rRNA molecules (25S, 5.8S and 5S rRNA) and at least 46 different proteins. The acidic ribosomal P-proteins form the stalk structure of the 60S subunit. They are organized as a pentameric complex in which uL10/P0 interacts with 2 heterodimers of P1 and P2 proteins.

It is found in the cytoplasm. Its function is as follows. Component of the ribosome, a large ribonucleoprotein complex responsible for the synthesis of proteins in the cell. The small ribosomal subunit (SSU) binds messenger RNAs (mRNAs) and translates the encoded message by selecting cognate aminoacyl-transfer RNA (tRNA) molecules. The large subunit (LSU) contains the ribosomal catalytic site termed the peptidyl transferase center (PTC), which catalyzes the formation of peptide bonds, thereby polymerizing the amino acids delivered by tRNAs into a polypeptide chain. The nascent polypeptides leave the ribosome through a tunnel in the LSU and interact with protein factors that function in enzymatic processing, targeting, and the membrane insertion of nascent chains at the exit of the ribosomal tunnel. The polypeptide is Large ribosomal subunit protein P1B (rpp102) (Schizosaccharomyces pombe (strain 972 / ATCC 24843) (Fission yeast)).